The chain runs to 305 residues: MLNFSDRLIESIKKKNSVLIAGIDTSIENIPDYFIKRFYDKEKSEIDNLKTILFEYIRRIIDAVEENVVGVKFQAAFFEQYSYHGFEVLHKLCEYTKNKKLVVIFDGKRNDISSSAKGYSNAYLGETPVFGKKMRFFEFDAITTNPYLGQDGIKPFVEDCERFKKGLFVLVKTSNPSSADFQDLMVEDKYLFEVVAEKVYEWGKNCIGKEGYSDVGAVVGATQPEAAKRIREILPNSFFLVPGIGVQGGKIEDLKYFVDSNNMGIIVNSSRDIIYAYKNYVHSDFEKSSYLASKNIKESINAAIS.

The active-site Proton donor is the Lys108.

This sequence belongs to the OMP decarboxylase family. Type 2 subfamily.

The enzyme catalyses orotidine 5'-phosphate + H(+) = UMP + CO2. The protein operates within pyrimidine metabolism; UMP biosynthesis via de novo pathway; UMP from orotate: step 2/2. This chain is Orotidine 5'-phosphate decarboxylase, found in Caldicellulosiruptor bescii (strain ATCC BAA-1888 / DSM 6725 / KCTC 15123 / Z-1320) (Anaerocellum thermophilum).